A 399-amino-acid chain; its full sequence is 3-phosphoshikimate 1-carboxyvinyltransferase (399 aa).

Residues K19, S20, and R24 each coordinate 3-phosphoshikimate. K19 contacts phosphoenolpyruvate. Positions 83 and 111 each coordinate phosphoenolpyruvate. Residues S152, S153, Q154, D288, Q310, and K314 each contribute to the 3-phosphoshikimate site. A phosphoenolpyruvate-binding site is contributed by Q154. D288 (proton acceptor) is an active-site residue. Residues R318, R359, and K385 each coordinate phosphoenolpyruvate.

This sequence belongs to the EPSP synthase family. In terms of assembly, monomer.

Its subcellular location is the cytoplasm. The enzyme catalyses 3-phosphoshikimate + phosphoenolpyruvate = 5-O-(1-carboxyvinyl)-3-phosphoshikimate + phosphate. Its pathway is metabolic intermediate biosynthesis; chorismate biosynthesis. Its function is as follows. Catalyzes the transfer of the enolpyruvyl moiety of phosphoenolpyruvate (PEP) to the 5-hydroxyl of shikimate-3-phosphate (S3P) to produce enolpyruvyl shikimate-3-phosphate and inorganic phosphate. In Thermococcus kodakarensis (strain ATCC BAA-918 / JCM 12380 / KOD1) (Pyrococcus kodakaraensis (strain KOD1)), this protein is 3-phosphoshikimate 1-carboxyvinyltransferase.